A 532-amino-acid polypeptide reads, in one-letter code: Zinc finger protein 350 (532 aa).

One can recognise a KRAB domain in the interval 8–79 (ITLEDVAVDF…EDGIHSGACS (72 aa)). 8 C2H2-type zinc fingers span residues 206–228 (HVCSECGKAFIKKSWLTDHQVMH), 234–256 (HRCSLCEKAFSRKFMLTEHQRTH), 262–284 (YECPECGKAFLKKSRLNIHQKTH), 290–312 (YICSECGKGFIQKGNLIVHQRIH), 318–340 (YICNECGKGFIQKTCLIAHQRFH), 346–368 (FVCSECGKSCSQKSGLIKHQRIH), 374–396 (FECSECGKAFSTKQKLIVHQRTH), and 402–424 (YGCNECGKAFAYMSCLVKHKRIH). A compositionally biased stretch (basic and acidic residues) spans 427-443 (EKQEAAKVENPPAERHS). The tract at residues 427–465 (EKQEAAKVENPPAERHSSLHTSDVMQEKNSANGATTQVP) is disordered. The segment covering 445–465 (LHTSDVMQEKNSANGATTQVP) has biased composition (polar residues).

This sequence belongs to the krueppel C2H2-type zinc-finger protein family. Interacts with BRCA1. Interacts with RNF11. In terms of tissue distribution, widely expressed.

It is found in the nucleus. It localises to the nucleus matrix. Transcriptional repressor. Binds to a specific sequence, 5'-GGGxxxCAGxxxTTT-3', within GADD45 intron 3. The polypeptide is Zinc finger protein 350 (ZNF350) (Homo sapiens (Human)).